The primary structure comprises 130 residues: MSMQDPIADMLTRIRNGQAANKVAISMPSSKLKVAIASVLAEEGYVESFKIVEGSKPELEITLKYFQNKPVVESIQRVSRPGLRIYKRKDELPKVMGGLGIAVVSTSKGVMTDRAARQAGLGGEIICYVA.

Belongs to the universal ribosomal protein uS8 family. As to quaternary structure, part of the 30S ribosomal subunit. Contacts proteins S5 and S12.

One of the primary rRNA binding proteins, it binds directly to 16S rRNA central domain where it helps coordinate assembly of the platform of the 30S subunit. This Actinobacillus pleuropneumoniae serotype 5b (strain L20) protein is Small ribosomal subunit protein uS8.